We begin with the raw amino-acid sequence, 349 residues long: Protein RecA (349 aa).

Position 64–71 (64–71) interacts with ATP; sequence GPESSGKT.

The protein belongs to the RecA family.

It localises to the cytoplasm. Its function is as follows. Can catalyze the hydrolysis of ATP in the presence of single-stranded DNA, the ATP-dependent uptake of single-stranded DNA by duplex DNA, and the ATP-dependent hybridization of homologous single-stranded DNAs. It interacts with LexA causing its activation and leading to its autocatalytic cleavage. In Rhodopseudomonas palustris (strain ATCC BAA-98 / CGA009), this protein is Protein RecA.